A 337-amino-acid chain; its full sequence is Tert-butanol monooxygenase / tert-amyl alcohol desaturase reductase subunit (337 aa).

The region spanning 9–114 (KYPKTALNLR…GHPRNNFPLI (106 aa)) is the FAD-binding FR-type domain. A 2Fe-2S ferredoxin-type domain is found at 254–337 (FQIKIASTGT…SKGATLVLDL (84 aa)). The [2Fe-2S] cluster site is built by Cys-288, Cys-293, Cys-296, and Cys-324.

It belongs to the PDR/VanB family. As to quaternary structure, this two-component enzyme is composed of an oxygenase (MdpJ) and a reductase (MdpK). Requires [2Fe-2S] cluster as cofactor.

Reductase component of a two-component system involved in the degradation of tertiary alcohols such as tert-butyl alcohol (TBA) and tert-amyl alcohol (TAA). MdpK probably provides electrons via its [2Fe-2S] iron-sulfur cluster to the MdpJ oxygenase subunit. The sequence is that of Tert-butanol monooxygenase / tert-amyl alcohol desaturase reductase subunit from Aquincola tertiaricarbonis.